We begin with the raw amino-acid sequence, 154 residues long: Nucleoside diphosphate kinase (154 aa).

K12, F60, R88, T94, R105, and N115 together coordinate ATP. H118 acts as the Pros-phosphohistidine intermediate in catalysis.

Belongs to the NDK family. The cofactor is Mg(2+).

It is found in the cytoplasm. It catalyses the reaction a 2'-deoxyribonucleoside 5'-diphosphate + ATP = a 2'-deoxyribonucleoside 5'-triphosphate + ADP. The catalysed reaction is a ribonucleoside 5'-diphosphate + ATP = a ribonucleoside 5'-triphosphate + ADP. Functionally, major role in the synthesis of nucleoside triphosphates other than ATP. The ATP gamma phosphate is transferred to the NDP beta phosphate via a ping-pong mechanism, using a phosphorylated active-site intermediate. The polypeptide is Nucleoside diphosphate kinase (Haloarcula marismortui (strain ATCC 43049 / DSM 3752 / JCM 8966 / VKM B-1809) (Halobacterium marismortui)).